We begin with the raw amino-acid sequence, 85 residues long: Ice-structuring protein 4 (85 aa).

The signal sequence occupies residues 1–21 (MRITEANPDPDAKAVPAAAAP).

It belongs to the type-I AFP family.

The protein localises to the secreted. Contributes to protect fish blood from freezing at subzero sea water temperatures. Lowers the blood freezing point. Binds to nascent ice crystals and prevents further growth. This chain is Ice-structuring protein 4, found in Pseudopleuronectes americanus (Winter flounder).